The primary structure comprises 82 residues: M-zodatoxin-Lt3a (82 aa).

The N-terminal stretch at 1–22 is a signal peptide; that stretch reads MKTYAVLLALVVAFVCIAESTG. Residues 23-61 constitute a propeptide that is removed on maturation; that stretch reads YPVEDLEDDELTELEAEALLEDLLEDLELEDLDYNEEAR. Positions 58–61 match the Processing quadruplet motif motif; the sequence is EEAR. A81 carries the alanine amide modification.

It belongs to the cationic peptide 03 (latarcin) family. 03 subfamily. In terms of processing, cleavage of the propeptide depends on the processing quadruplet motif (XXXR, with at least one of X being E). In terms of tissue distribution, expressed by the venom gland.

The protein resides in the secreted. It localises to the target cell membrane. It has antimicrobial activity against Gram-positive bacteria (A.globiformis VKM Ac-1112 (MIC=0.3 uM), and B.subtilis VKM B-501 (MIC=1.2 uM)), Gram-negative bacteria (E.coli DH5-alpha (MIC=2.5 uM), E.coli MH1 (MIC=6.0 uM), and P.aeruginosa PAO1 (MIC&gt;40 uM)), and yeasts (P.pastoris GS115 (MIC=20 uM), and S.cerevisiae Y190 (MIC=20 uM)). Causes paralysis, but is not lethal when injected into insect (M.domestica) larvae. A second study reports antibacterial activity against E.coli (MIC=100 uM) and S.aureus (MIC=84 uM). Furthermore, increases efficacy of antibiotics (chloramphenicol, streptomycin, kanamycin, novobiocin) when tested against E.coli, probably by facilitating their incorporation into the bacteria. The protein is M-zodatoxin-Lt3a of Lachesana tarabaevi (Spider).